A 1356-amino-acid chain; its full sequence is DNA-directed RNA polymerase subunit beta (1356 aa).

The protein belongs to the RNA polymerase beta chain family. The RNAP catalytic core consists of 2 alpha, 1 beta, 1 beta' and 1 omega subunit. When a sigma factor is associated with the core the holoenzyme is formed, which can initiate transcription.

It catalyses the reaction RNA(n) + a ribonucleoside 5'-triphosphate = RNA(n+1) + diphosphate. Its function is as follows. DNA-dependent RNA polymerase catalyzes the transcription of DNA into RNA using the four ribonucleoside triphosphates as substrates. The chain is DNA-directed RNA polymerase subunit beta from Stutzerimonas stutzeri (strain A1501) (Pseudomonas stutzeri).